Here is a 259-residue protein sequence, read N- to C-terminus: GTP cyclohydrolase FolE2 (259 aa).

Belongs to the GTP cyclohydrolase IV family.

It catalyses the reaction GTP + H2O = 7,8-dihydroneopterin 3'-triphosphate + formate + H(+). It functions in the pathway cofactor biosynthesis; 7,8-dihydroneopterin triphosphate biosynthesis; 7,8-dihydroneopterin triphosphate from GTP: step 1/1. Converts GTP to 7,8-dihydroneopterin triphosphate. This is GTP cyclohydrolase FolE2 from Thermosipho melanesiensis (strain DSM 12029 / CIP 104789 / BI429).